Here is a 113-residue protein sequence, read N- to C-terminus: U11-theraphotoxin-Hhn1a (113 aa).

An N-terminal signal peptide occupies residues 1–21 (MNTVRATFLLVFVLAVSLGQA). The propeptide occupies 22 to 74 (DKDENRMEMQEKTEQGKSYLDFAENLLLQKLEELEAKLLEEDSEESRNSRQKR). Positions 60–69 (LEEDSEESRN) are enriched in basic and acidic residues. The interval 60–82 (LEEDSEESRNSRQKRCIGEGVPC) is disordered. Intrachain disulfides connect Cys-75/Cys-90, Cys-82/Cys-95, and Cys-89/Cys-110.

This sequence belongs to the neurotoxin 14 (magi-1) family. 01 (HNTX-16) subfamily. As to expression, expressed by the venom gland.

The protein localises to the secreted. Its function is as follows. Probable ion channel inhibitor. In Cyriopagopus hainanus (Chinese bird spider), this protein is U11-theraphotoxin-Hhn1a.